The primary structure comprises 378 residues: Queuine tRNA-ribosyltransferase (378 aa).

Catalysis depends on Asp90, which acts as the Proton acceptor. Substrate contacts are provided by residues 90–94, Asp144, Gln188, and Gly220; that span reads DSGGF. The tract at residues 251-257 is RNA binding; that stretch reads GVGTPED. Asp270 functions as the Nucleophile in the catalytic mechanism. Residues 275 to 279 form an RNA binding; important for wobble base 34 recognition region; sequence TRNAR. 4 residues coordinate Zn(2+): Cys308, Cys310, Cys313, and His339.

This sequence belongs to the queuine tRNA-ribosyltransferase family. In terms of assembly, homodimer. Within each dimer, one monomer is responsible for RNA recognition and catalysis, while the other monomer binds to the replacement base PreQ1. It depends on Zn(2+) as a cofactor.

It catalyses the reaction 7-aminomethyl-7-carbaguanine + guanosine(34) in tRNA = 7-aminomethyl-7-carbaguanosine(34) in tRNA + guanine. Its pathway is tRNA modification; tRNA-queuosine biosynthesis. In terms of biological role, catalyzes the base-exchange of a guanine (G) residue with the queuine precursor 7-aminomethyl-7-deazaguanine (PreQ1) at position 34 (anticodon wobble position) in tRNAs with GU(N) anticodons (tRNA-Asp, -Asn, -His and -Tyr). Catalysis occurs through a double-displacement mechanism. The nucleophile active site attacks the C1' of nucleotide 34 to detach the guanine base from the RNA, forming a covalent enzyme-RNA intermediate. The proton acceptor active site deprotonates the incoming PreQ1, allowing a nucleophilic attack on the C1' of the ribose to form the product. After dissociation, two additional enzymatic reactions on the tRNA convert PreQ1 to queuine (Q), resulting in the hypermodified nucleoside queuosine (7-(((4,5-cis-dihydroxy-2-cyclopenten-1-yl)amino)methyl)-7-deazaguanosine). The polypeptide is Queuine tRNA-ribosyltransferase (Nautilia profundicola (strain ATCC BAA-1463 / DSM 18972 / AmH)).